The sequence spans 441 residues: Protein MONOCULM 1 (441 aa).

Residues 1–33 (MLRSLHSSSSSDTDNNSGGCKNNGGGGGEAAAA) form a disordered region. The segment covering 7–20 (SSSSSDTDNNSGGC) has biased composition (low complexity). Positions 21-33 (KNNGGGGGEAAAA) are enriched in gly residues. Residues 41–437 (RAVAAAAPST…RPLLSVSAWQ (397 aa)) enclose the GRAS domain. The leucine repeat I (LRI) stretch occupies residues 48–126 (PSTRDLLLAC…GAARPASSGA (79 aa)). The tract at residues 127–195 (YLAFNQIAPF…LGPPEVRVTG (69 aa)) is VHIID. Residues 158 to 162 (VHILD) carry the VHIID motif. Positions 205–256 (RTGNRLRAFARSIHLPFHFTPLLLSCATTAPHHVAGTSTGAAAAASTAAAAT) are leucine repeat II (LRII). Residues 266-361 (LAVNCVMFLH…QEVLGREIEA (96 aa)) are PFYRE. The segment at 364–437 (GPSGGRWWRG…RPLLSVSAWQ (74 aa)) is SAW.

Belongs to the GRAS family. As to expression, expressed in a small number of epidermal or subepidermal cells at the leaf axils, in axillary meristems and the entire tiller buds. Undetected in the shoot apical meristem.

Its subcellular location is the nucleus. Functionally, putative transcription regulator that controls rice tillering by initiating axillary buds and promoting their outgrowth. Rice tiller is a specialized grain-bearing branch that is formed on the unelongated basal internode and grows independently of the mother stem (culm) by means of its own adventitious roots. In Oryza sativa subsp. japonica (Rice), this protein is Protein MONOCULM 1.